The chain runs to 374 residues: MSRPHHATLESIKYTSGSLSLLDQSKLPLETVFHDVLTVEDIWSAIKEMRVRGAPAIAVSAALGIAVATQRKVDCGALKSGSEVQAFLLKSCDFVMASRPTAVNLFNCLRDLKAQVDKFDSTKPAGEVAKAFVELAEAVYAEDVGLNESIMRHGAAHILAAAKEYGREKVSILTICNTGALATSRYGTALGVVRQLFYDDKLEKVYACETRPWNQGARLTVYECVQEGIPCTLICDGAASSLMRSHKIDAVVVGADRICQNGDTANKIGTYNLAVLAKFHGVKFYVAASTKTLDAETASGDHVHIEEREPTEITTNMVTKQRVVVDGPHLSIWNPVFDITPGELITGGIITEKGVQGPAASTPHYDIASIVAQE.

Aspartate 256 serves as the catalytic Proton donor.

The protein belongs to the eIF-2B alpha/beta/delta subunits family. MtnA subfamily.

It is found in the cytoplasm. Its subcellular location is the nucleus. It carries out the reaction 5-(methylsulfanyl)-alpha-D-ribose 1-phosphate = 5-(methylsulfanyl)-D-ribulose 1-phosphate. It functions in the pathway amino-acid biosynthesis; L-methionine biosynthesis via salvage pathway; L-methionine from S-methyl-5-thio-alpha-D-ribose 1-phosphate: step 1/6. In terms of biological role, catalyzes the interconversion of methylthioribose-1-phosphate (MTR-1-P) into methylthioribulose-1-phosphate (MTRu-1-P). In Leishmania braziliensis, this protein is Methylthioribose-1-phosphate isomerase.